Consider the following 298-residue polypeptide: Multifunctional dioxygenase ausE (298 aa).

Positions 72 and 127 each coordinate substrate. Fe cation-binding residues include His-130 and Asp-132. A substrate-binding site is contributed by Thr-167. His-214 is a Fe cation binding site. A substrate-binding site is contributed by Arg-226.

It belongs to the PhyH family. Homodimer. Fe cation serves as cofactor.

The enzyme catalyses preaustinoid A1 + 2-oxoglutarate + O2 = preaustinoid A2 + succinate + CO2 + H2O. It catalyses the reaction preaustinoid A2 + 2-oxoglutarate + O2 = preaustinoid A3 + succinate + CO2 + H2O. It carries out the reaction berkeleyone A + 2-oxoglutarate + O2 = preaustinoid A + succinate + CO2 + H2O. It functions in the pathway secondary metabolite biosynthesis; terpenoid biosynthesis. In terms of biological role, multifunctional dioxygenase; part of the gene cluster that mediates the biosynthesis of calidodehydroaustin, a fungal meroterpenoid. The first step of the pathway is the synthesis of 3,5-dimethylorsellinic acid by the polyketide synthase ausA. 3,5-dimethylorsellinic acid is then prenylated by the polyprenyl transferase ausN. Further epoxidation by the FAD-dependent monooxygenase ausM and cyclization by the probable terpene cyclase ausL lead to the formation of protoaustinoid A. Protoaustinoid A is then oxidized to spiro-lactone preaustinoid A3 by the combined action of the FAD-binding monooxygenases ausB and ausC, and the dioxygenase ausE. Acid-catalyzed keto-rearrangement and ring contraction of the tetraketide portion of preaustinoid A3 by ausJ lead to the formation of preaustinoid A4. The aldo-keto reductase ausK, with the help of ausH, is involved in the next step by transforming preaustinoid A4 into isoaustinone which is in turn hydroxylated by the P450 monooxygenase ausI to form austinolide. The cytochrome P450 monooxygenase ausG modifies austinolide to austinol. Austinol is further acetylated to austin by the O-acetyltransferase ausP, which spontaneously changes to dehydroaustin. The cytochrome P450 monooxygenase ausR then converts dehydroaustin is into 7-dehydrodehydroaustin. The hydroxylation catalyzed by ausR permits the O-acetyltransferase ausQ to add an additional acetyl group to the molecule, leading to the formation of acetoxydehydroaustin. The short chain dehydrogenase ausT catalyzes the reduction of the double bond present between carbon atoms 1 and 2 to convert 7-dehydrodehydroaustin into 1,2-dihydro-7-hydroxydehydroaustin. AusQ catalyzes not only an acetylation reaction but also the addition of the PKS ausV diketide product to 1,2-dihydro-7-hydroxydehydroaustin, forming precalidodehydroaustin. Finally, the iron/alpha-ketoglutarate-dependent dioxygenase converts precalidodehydroaustin into calidodehydroaustin. In Aspergillus calidoustus, this protein is Multifunctional dioxygenase ausE.